The sequence spans 131 residues: Small ribosomal subunit protein uS8 (131 aa).

The protein belongs to the universal ribosomal protein uS8 family. As to quaternary structure, part of the 30S ribosomal subunit. Contacts proteins S5 and S12.

Its function is as follows. One of the primary rRNA binding proteins, it binds directly to 16S rRNA central domain where it helps coordinate assembly of the platform of the 30S subunit. In Acholeplasma laidlawii (strain PG-8A), this protein is Small ribosomal subunit protein uS8.